Here is a 60-residue protein sequence, read N- to C-terminus: Large ribosomal subunit protein bL33 (60 aa).

The protein belongs to the bacterial ribosomal protein bL33 family.

The protein is Large ribosomal subunit protein bL33 of Pelodictyon phaeoclathratiforme (strain DSM 5477 / BU-1).